Reading from the N-terminus, the 182-residue chain is Bifunctional protein PyrR (182 aa).

The PRPP-binding signature appears at 98–110; the sequence is VVLVDDVLFTGRS.

It belongs to the purine/pyrimidine phosphoribosyltransferase family. PyrR subfamily.

The catalysed reaction is UMP + diphosphate = 5-phospho-alpha-D-ribose 1-diphosphate + uracil. Its function is as follows. Regulates the transcription of the pyrimidine nucleotide (pyr) operon in response to exogenous pyrimidines. In terms of biological role, also displays a weak uracil phosphoribosyltransferase activity which is not physiologically significant. The polypeptide is Bifunctional protein PyrR (Dehalococcoides mccartyi (strain ATCC BAA-2100 / JCM 16839 / KCTC 5957 / BAV1)).